A 55-amino-acid chain; its full sequence is Metallothionein-1 (55 aa).

It belongs to the metallothionein superfamily. Type 11 family.

The polypeptide is Metallothionein-1 (MTP1) (Yarrowia lipolytica (strain CLIB 122 / E 150) (Yeast)).